The following is a 525-amino-acid chain: Light-independent protochlorophyllide reductase subunit B (525 aa).

Aspartate 36 provides a ligand contact to [4Fe-4S] cluster. Aspartate 286 (proton donor) is an active-site residue. 421–422 (GL) is a binding site for substrate.

Belongs to the ChlB/BchB/BchZ family. Protochlorophyllide reductase is composed of three subunits; ChlL, ChlN and ChlB. Forms a heterotetramer of two ChlB and two ChlN subunits. [4Fe-4S] cluster serves as cofactor.

It catalyses the reaction chlorophyllide a + oxidized 2[4Fe-4S]-[ferredoxin] + 2 ADP + 2 phosphate = protochlorophyllide a + reduced 2[4Fe-4S]-[ferredoxin] + 2 ATP + 2 H2O. Its pathway is porphyrin-containing compound metabolism; chlorophyll biosynthesis (light-independent). Functionally, component of the dark-operative protochlorophyllide reductase (DPOR) that uses Mg-ATP and reduced ferredoxin to reduce ring D of protochlorophyllide (Pchlide) to form chlorophyllide a (Chlide). This reaction is light-independent. The NB-protein (ChlN-ChlB) is the catalytic component of the complex. In Prochlorococcus marinus (strain NATL2A), this protein is Light-independent protochlorophyllide reductase subunit B.